Consider the following 333-residue polypeptide: Na(+)/H(+) exchange regulatory cofactor NHE-RF1 (333 aa).

Residues 13-93 (LCCMEKGPDG…AVRLLVVQPQ (81 aa)) enclose the PDZ 1 domain. 2 disordered regions span residues 90 to 164 (VQPQ…RAVD) and 232 to 333 (LAGP…FSNL). Over residues 97–111 (QPPKTHSDPDGEAQR) the composition is skewed to basic and acidic residues. Over residues 112–122 (EPPAAETPAAE) the composition is skewed to low complexity. The span at 124–133 (SGPEERELRP) shows a compositional bias: basic and acidic residues. One can recognise a PDZ 2 domain in the interval 135–215 (LCRIKKGPNG…ETKLLVVGVL (81 aa)). Composition is skewed to basic and acidic residues over residues 274 to 289 (SETH…DKRS) and 323 to 333 (WSKKNELFSNL).

Its subcellular location is the endomembrane system. The protein localises to the cell projection. The protein resides in the filopodium. It localises to the ruffle. It is found in the microvillus. Its function is as follows. Scaffold protein that connects plasma membrane proteins with members of the ezrin/moesin/radixin family and thereby helps to link them to the actin cytoskeleton and to regulate their surface expression. Was first known to play a role in the regulation of the activity and subcellular location of SLC9A3. May enhance Wnt signaling. The sequence is that of Na(+)/H(+) exchange regulatory cofactor NHE-RF1 (NHERF1) from Gallus gallus (Chicken).